A 112-amino-acid chain; its full sequence is Small ribosomal subunit protein bS6 (112 aa).

This sequence belongs to the bacterial ribosomal protein bS6 family.

Binds together with bS18 to 16S ribosomal RNA. The protein is Small ribosomal subunit protein bS6 of Chlamydia caviae (strain ATCC VR-813 / DSM 19441 / 03DC25 / GPIC) (Chlamydophila caviae).